The sequence spans 101 residues: Urease subunit beta (101 aa).

It belongs to the urease beta subunit family. Heterotrimer of UreA (gamma), UreB (beta) and UreC (alpha) subunits. Three heterotrimers associate to form the active enzyme.

Its subcellular location is the cytoplasm. The catalysed reaction is urea + 2 H2O + H(+) = hydrogencarbonate + 2 NH4(+). Its pathway is nitrogen metabolism; urea degradation; CO(2) and NH(3) from urea (urease route): step 1/1. The protein is Urease subunit beta of Rhodopseudomonas palustris (strain ATCC BAA-98 / CGA009).